A 650-amino-acid chain; its full sequence is Fructose-1,6-bisphosphatase class 3 (650 aa).

Belongs to the FBPase class 3 family. It depends on Mn(2+) as a cofactor.

The catalysed reaction is beta-D-fructose 1,6-bisphosphate + H2O = beta-D-fructose 6-phosphate + phosphate. The protein operates within carbohydrate biosynthesis; gluconeogenesis. The sequence is that of Fructose-1,6-bisphosphatase class 3 from Staphylococcus saprophyticus subsp. saprophyticus (strain ATCC 15305 / DSM 20229 / NCIMB 8711 / NCTC 7292 / S-41).